The sequence spans 263 residues: Elongation factor Ts (263 aa).

The involved in Mg(2+) ion dislocation from EF-Tu stretch occupies residues 82–85 (TDFV). A compositionally biased stretch (low complexity) spans 221–251 (APPAVVEAPVAETPEPAVAETPEAKPAATES). The disordered stretch occupies residues 221 to 263 (APPAVVEAPVAETPEPAVAETPEAKPAATESKPAKSKSAKKKK). Basic residues predominate over residues 254–263 (AKSKSAKKKK).

The protein belongs to the EF-Ts family.

It localises to the cytoplasm. Functionally, associates with the EF-Tu.GDP complex and induces the exchange of GDP to GTP. It remains bound to the aminoacyl-tRNA.EF-Tu.GTP complex up to the GTP hydrolysis stage on the ribosome. The polypeptide is Elongation factor Ts (Cyanothece sp. (strain PCC 7425 / ATCC 29141)).